The primary structure comprises 328 residues: Ribosomal protein L11 methyltransferase (328 aa).

Residues threonine 153, glycine 174, aspartate 196, and asparagine 263 each coordinate S-adenosyl-L-methionine.

This sequence belongs to the methyltransferase superfamily. PrmA family.

The protein resides in the cytoplasm. It catalyses the reaction L-lysyl-[protein] + 3 S-adenosyl-L-methionine = N(6),N(6),N(6)-trimethyl-L-lysyl-[protein] + 3 S-adenosyl-L-homocysteine + 3 H(+). In terms of biological role, methylates ribosomal protein L11. The polypeptide is Ribosomal protein L11 methyltransferase (Chloroflexus aurantiacus (strain ATCC 29366 / DSM 635 / J-10-fl)).